The chain runs to 366 residues: BIIDXI-like protein At5g11420 (366 aa).

Positions 1 to 22 are cleaved as a signal peptide; it reads MKGGSLSFLFVLLIATITSVIC. N-linked (GlcNAc...) asparagine glycosylation is found at N98, N122, and N209.

Interacts with PME3.

The protein resides in the secreted. It is found in the cell wall. Together with BIIDXI, acts as a positive regulator of PME3 activity during several developmental processes, including seed germination and endosperm (testa) rupture at the micropyle, probably by modulating the pectin status in cell walls. The chain is BIIDXI-like protein At5g11420 from Arabidopsis thaliana (Mouse-ear cress).